The following is a 398-amino-acid chain: MSKTIAINAGSSSLKWQLYQMPEEAVLAQGIIERIGLKDSISTVKYDGKKEEQILDIHDHTEAVKILLNDLIHFGIIAAYDEITGVGHRVVAGGELFKESVVVNDKVLEHIEELSVLAPLHNPGAAAGIRAFRDILPDITSVCVFDTSFHTSMAKHTYLYPIPQKYYTDYKVRKYGAHGTSHKYVAQEAAKMLGRPLEELKLITAHIGNGVSITANYHGKSVDTSMGFTPLAGPMMGTRSGDIDPAIIPYLIEQDPELKDAADVVNMLNKKSGLSGVSGISSDMRDIEAGLQEDNPDAVLAYNIFIDRIKKCIGQYFAVLNGADALVFTAGMGENAPLMRQDVIGGLTWFGMDIDPEKNVFGYRGDISTPESKVKVLVISTDEELCIARDVERLKNTK.

A Mg(2+)-binding site is contributed by asparagine 8. Position 15 (lysine 15) interacts with ATP. Substrate is bound at residue arginine 89. Residue aspartate 146 is the Proton donor/acceptor of the active site. ATP is bound by residues 206 to 210 (HIGNG), 283 to 285 (DMR), and 331 to 335 (GMGEN). Position 383 (glutamate 383) interacts with Mg(2+).

Belongs to the acetokinase family. In terms of assembly, homodimer. Requires Mg(2+) as cofactor. The cofactor is Mn(2+).

Its subcellular location is the cytoplasm. It catalyses the reaction acetate + ATP = acetyl phosphate + ADP. The protein operates within metabolic intermediate biosynthesis; acetyl-CoA biosynthesis; acetyl-CoA from acetate: step 1/2. Catalyzes the formation of acetyl phosphate from acetate and ATP. Can also catalyze the reverse reaction. This is Acetate kinase from Streptococcus pyogenes serotype M2 (strain MGAS10270).